The primary structure comprises 721 residues: Catalase-peroxidase (721 aa).

The segment at residues 89-212 (WHSAGTYRTG…LAAVQMGLIY (124 aa)) is a cross-link (tryptophyl-tyrosyl-methioninium (Trp-Tyr) (with M-238)). H90 (proton acceptor) is an active-site residue. Positions 212-238 (YVNPEGPNGDPDPFAAAVDIRETFARM) form a cross-link, tryptophyl-tyrosyl-methioninium (Tyr-Met) (with W-89). H253 contributes to the heme b binding site.

This sequence belongs to the peroxidase family. Peroxidase/catalase subfamily. Homodimer or homotetramer. Heme b is required as a cofactor. Post-translationally, formation of the three residue Trp-Tyr-Met cross-link is important for the catalase, but not the peroxidase activity of the enzyme.

It carries out the reaction H2O2 + AH2 = A + 2 H2O. The enzyme catalyses 2 H2O2 = O2 + 2 H2O. Its function is as follows. Bifunctional enzyme with both catalase and broad-spectrum peroxidase activity. The chain is Catalase-peroxidase from Shewanella baltica (strain OS195).